A 618-amino-acid polypeptide reads, in one-letter code: DNA mismatch repair protein MutL (618 aa).

Positions 366 to 381 are enriched in low complexity; the sequence is AEPTAAREPATPRYSG. The interval 366–405 is disordered; it reads AEPTAAREPATPRYSGGTSGGNGGRQSAGGWPHAQPGYQK. The span at 382-392 shows a compositional bias: gly residues; the sequence is GTSGGNGGRQS.

Belongs to the DNA mismatch repair MutL/HexB family.

Its function is as follows. This protein is involved in the repair of mismatches in DNA. It is required for dam-dependent methyl-directed DNA mismatch repair. May act as a 'molecular matchmaker', a protein that promotes the formation of a stable complex between two or more DNA-binding proteins in an ATP-dependent manner without itself being part of a final effector complex. This chain is DNA mismatch repair protein MutL, found in Salmonella agona (strain SL483).